Here is a 563-residue protein sequence, read N- to C-terminus: MSKSQEQRLQNFVTVIQGLNDILDDKMDEATEKFKSGNSSFHLSGQAVVAFIQAVLTFEPSRFKDSQNRIDIAIKALSADKDDASKNNTFLSTFDPGVEYRVSIGLMLLLSALIGFCSESIVTSVKSVYKLRKAHSIFSKINKRHFDHFSAAFHSTGRSDVDLANEYVQTGTLLCTGLFTLLISLLPPKMITILNVFGYKGDRDWALQCMWMPALQRPTSFFAAVAFAALIQYYSGAVQLCSIYKKTPEEPDGWPDKRCFEILEKVEKAHPDGPMWPLHRAKLLSMVKKQDEAIVVLEELMAKPPPRLKQLEVLIVFEHALDCAFSHRYVDGANSFLKLSSLNDSSTALYSYFAAACFLQDVHVNANVEALEKASKLLEPLHDLVANKTAPLDVHIRRKVGKLIKRRASAGNQGGLAEYVGFSPLYELVYVWNGFRRMTDDELSKFDVERMEPWQDQDDDICQALIKATVLRNLGRTDEVFPILQKICAVTRTTETWAVAFAHYEMAVAFFESNGSKKEGLKHCDAYLRKARDFGGDNEFESRLIIRVQLARHVVRKCLQSMS.

Belongs to the IML2 family. As to quaternary structure, interacts with lipid droplet proteins.

The protein localises to the cytoplasm. It is found in the nucleus. Inclusion body (IB) resident protein that interacts strongly with lipid droplet (LD) proteins. Involved in LD-mediated IB clearing after protein folding stress, probably by enabling access to the IBs of an LD-stored soluble sterol derivative that acts as a chaperone in inclusion clearing. The protein is Inclusion body clearance protein IML2 of Schizosaccharomyces pombe (strain 972 / ATCC 24843) (Fission yeast).